A 189-amino-acid chain; its full sequence is Crossover junction endodeoxyribonuclease RuvC (189 aa).

Active-site residues include Asp8, Glu67, and Asp139. Residues Asp8, Glu67, and Asp139 each coordinate Mg(2+).

This sequence belongs to the RuvC family. In terms of assembly, homodimer which binds Holliday junction (HJ) DNA. The HJ becomes 2-fold symmetrical on binding to RuvC with unstacked arms; it has a different conformation from HJ DNA in complex with RuvA. In the full resolvosome a probable DNA-RuvA(4)-RuvB(12)-RuvC(2) complex forms which resolves the HJ. It depends on Mg(2+) as a cofactor.

The protein resides in the cytoplasm. The enzyme catalyses Endonucleolytic cleavage at a junction such as a reciprocal single-stranded crossover between two homologous DNA duplexes (Holliday junction).. Its function is as follows. The RuvA-RuvB-RuvC complex processes Holliday junction (HJ) DNA during genetic recombination and DNA repair. Endonuclease that resolves HJ intermediates. Cleaves cruciform DNA by making single-stranded nicks across the HJ at symmetrical positions within the homologous arms, yielding a 5'-phosphate and a 3'-hydroxyl group; requires a central core of homology in the junction. The consensus cleavage sequence is 5'-(A/T)TT(C/G)-3'. Cleavage occurs on the 3'-side of the TT dinucleotide at the point of strand exchange. HJ branch migration catalyzed by RuvA-RuvB allows RuvC to scan DNA until it finds its consensus sequence, where it cleaves and resolves the cruciform DNA. The chain is Crossover junction endodeoxyribonuclease RuvC from Histophilus somni (strain 129Pt) (Haemophilus somnus).